The chain runs to 358 residues: Chorismate synthase (358 aa).

The interval 39–61 (ADIQPFLDKRRPGQSRHTTQRQE) is disordered. The NADP(+) site is built by Arg-48 and Arg-54. FMN contacts are provided by residues 125–127 (RSS), 237–238 (NA), Gly-284, 299–303 (KPTSS), and Arg-325.

This sequence belongs to the chorismate synthase family. As to quaternary structure, homotetramer. Requires FMNH2 as cofactor.

It catalyses the reaction 5-O-(1-carboxyvinyl)-3-phosphoshikimate = chorismate + phosphate. Its pathway is metabolic intermediate biosynthesis; chorismate biosynthesis; chorismate from D-erythrose 4-phosphate and phosphoenolpyruvate: step 7/7. In terms of biological role, catalyzes the anti-1,4-elimination of the C-3 phosphate and the C-6 proR hydrogen from 5-enolpyruvylshikimate-3-phosphate (EPSP) to yield chorismate, which is the branch point compound that serves as the starting substrate for the three terminal pathways of aromatic amino acid biosynthesis. This reaction introduces a second double bond into the aromatic ring system. This chain is Chorismate synthase, found in Sphingopyxis alaskensis (strain DSM 13593 / LMG 18877 / RB2256) (Sphingomonas alaskensis).